The following is a 193-amino-acid chain: Protein PapJ (193 aa).

The signal sequence occupies residues 1-27 (MVVNKTTAVLYLIALSLSGFIHTFLRA).

It localises to the periplasm. In terms of biological role, this protein maintains pilus integrity and thus is an important participant in pilus assembly. It may function as molecular chaperone directly or indirectly in the correct assembly of PapA subunits. The chain is Protein PapJ (papJ) from Escherichia coli.